Here is a 216-residue protein sequence, read N- to C-terminus: Ras-related protein Rab11C (216 aa).

19-26 is a binding site for GTP; it reads GDSGVGKS. Positions 41–49 match the Effector region motif; the sequence is SKSTIGVEF. Residues 67-71 and 125-128 each bind GTP; these read DTAGQ and NKSD. 2 S-geranylgeranyl cysteine lipidation sites follow: cysteine 213 and cysteine 214.

The protein belongs to the small GTPase superfamily. Rab family.

The protein resides in the cell membrane. The chain is Ras-related protein Rab11C (RAB11C) from Lotus japonicus (Lotus corniculatus var. japonicus).